The sequence spans 422 residues: Ferrochelatase, mitochondrial (422 aa).

A mitochondrion-targeting transit peptide spans 1-53; sequence MLSASANMAAALRAAGALLREPLVHGSSRACQPWRCQSGAAVAATTEKVHHAK. At K56 the chain carries N6-acetyllysine. Positions 114, 122, and 129 each coordinate protoporphyrin IX. An N6-succinyllysine modification is found at K137. Residue C195 coordinates [2Fe-2S] cluster. Residue H229 is part of the active site. N6-acetyllysine; alternate is present on K289. At K289 the chain carries N6-succinyllysine; alternate. D382 is a catalytic residue. Positions 402, 405, and 410 each coordinate [2Fe-2S] cluster. K414 bears the N6-acetyllysine; alternate mark. Residue K414 is modified to N6-succinyllysine; alternate.

The protein belongs to the ferrochelatase family. Homodimer. Homotetramer. Interaction with PGRMC1; the interaction results in decreased FECH activity. Interacts with ABCB10 and SLC25A37; this interaction forms an oligomeric complex. Forms a complex with ABCB7 and ABCB10, where a dimeric FECH bridges ABCB7 and ABCB10 homodimers; this complex may be required for cellular iron homeostasis, mitochondrial function and heme biosynthesis. Interacts with ABCB7 and ABCB10. It depends on [2Fe-2S] cluster as a cofactor. As to expression, erythroid and hepatic cells.

Its subcellular location is the mitochondrion inner membrane. It carries out the reaction heme b + 2 H(+) = protoporphyrin IX + Fe(2+). Its pathway is porphyrin-containing compound metabolism; protoheme biosynthesis; protoheme from protoporphyrin-IX: step 1/1. Functionally, catalyzes the ferrous insertion into protoporphyrin IX. The sequence is that of Ferrochelatase, mitochondrial from Mus musculus (Mouse).